The sequence spans 238 residues: Phosphoglycolate phosphatase (238 aa).

The active-site Nucleophile is Asp8. The Mg(2+) site is built by Asp8 and Asp10. Substrate is bound at residue Lys163. 2 residues coordinate Mg(2+): Asp186 and Asp190.

The protein belongs to the archaeal SPP-like hydrolase family. Mg(2+) serves as cofactor.

The enzyme catalyses 2-phosphoglycolate + H2O = glycolate + phosphate. Catalyzes the dephosphorylation of 2-phosphoglycolate. The polypeptide is Phosphoglycolate phosphatase (Staphylothermus marinus (strain ATCC 43588 / DSM 3639 / JCM 9404 / F1)).